Reading from the N-terminus, the 450-residue chain is Probable transporter MCH1 (450 aa).

A run of 12 helical transmembrane segments spans residues 32–52 (AFLV…ISLY), 69–89 (VLFS…GLLS), 96–116 (MLSW…AWVF), 127–147 (VLCF…ALFT), 157–177 (LCSI…GSQL), 199–219 (LAVA…IVTM), 255–275 (PAAY…EMFL), 290–309 (VLPE…GLII), 320–340 (MSVQ…VVLA), 355–375 (LSGA…LAVW), 378–398 (AVFG…SILF), and 423–443 (VFWS…LMYL).

It belongs to the major facilitator superfamily.

It localises to the vacuole membrane. Probable transporter. The polypeptide is Probable transporter MCH1 (MCH1) (Eremothecium gossypii (strain ATCC 10895 / CBS 109.51 / FGSC 9923 / NRRL Y-1056) (Yeast)).